The chain runs to 530 residues: uncharacterized protein (530 aa).

Positions 1 to 33 (MNNMSLKFPDIAINSSESSDDEDPSSKNEKKDG) are disordered. The segment covering 24–33 (PSSKNEKKDG) has biased composition (basic and acidic residues). A run of 12 helical transmembrane segments spans residues 83–103 (FFILPIMCITYGMQYLDKTAV), 124–144 (WLSTIFYLGYMIAQYPAGYLL), 147–167 (FPISYFMFIAAFLWSACVLLM), 181–201 (FFSGVFEGCVNPAFVALTAMW), 211–231 (VVSWYAFNGVAIMVGALLGYG), 244–264 (YPFLVIGAISTAWSFVYLFFP), 323–343 (VTNAMSVFSALIIQGIGYSGI), 346–366 (TLLTLPSGAFAVAGMIASGIF), 375–395 (IPLAMTTSSLTIVGSIMIWKI), 404–424 (VVGVWLFCTISSGNAVILSLL), 436–456 (TVNATMFLFYSIGNIVSPQLF), and 471–491 (SLVSVCLFEGVLALLAFYYIF).

This sequence belongs to the major facilitator superfamily. Allantoate permease family.

The protein resides in the endoplasmic reticulum. Its subcellular location is the membrane. This is an uncharacterized protein from Schizosaccharomyces pombe (strain 972 / ATCC 24843) (Fission yeast).